Reading from the N-terminus, the 189-residue chain is Thymidine kinase (189 aa).

ATP-binding positions include 9–16 (GTMNSGKT) and 85–88 (DECQ). The active-site Proton acceptor is glutamate 86. Residues cysteine 143, cysteine 146, cysteine 180, and histidine 183 each contribute to the Zn(2+) site.

This sequence belongs to the thymidine kinase family. As to quaternary structure, homotetramer.

The protein resides in the cytoplasm. The catalysed reaction is thymidine + ATP = dTMP + ADP + H(+). The protein is Thymidine kinase of Streptococcus agalactiae serotype Ia (strain ATCC 27591 / A909 / CDC SS700).